Consider the following 522-residue polypeptide: MDSGLGRSSETSLKALPSMASNATRNTDPDQQGVRFSSMDQPPCFARPGQSFPAFPPLFGVQSSSLYLPDDIEAKIGNQFESNPSPNNPTMDWDPQAMLSNLSFLEQKIKQVKDIVQSMSNRESQVAGGSSEAQAKQQLVTADLTCIIIQLISTAGSLLPSMKNPISSNPALRHLSNTLCAPMILGTNCNLRPSANDEATIPDISKTHDYEELMNSLNTTQAESDEMMNCQNPCGGEGSEPIPMEDHDVKESDDGGERENLPPGSYVVLQLEKEEILAPHTHFCLICGKGFKRDANLRMHMRGHGDEYKTAAALAKPSKDSSLESAPVTRYSCPYVGCKRNKEHKKFQPLKTILCVKNHYKRSHCDKSYTCSRCNTKKFSVIADLKTHEKHCGRDKWLCSCGTTFSRKDKLFGHVALFQGHTPALPMDDIKVTGASEQPQGSEAMNTMVGSAGYNFPGSSSDDIPNLDMKMADDPRYFSPLSFDPCFGGLDDFTRPGFDISENPFSFLPSGSCSFGQQNGDS.

2 stretches are compositionally biased toward polar residues: residues 1–12 (MDSGLGRSSETS) and 19–40 (MASN…SSMD). Disordered stretches follow at residues 1 to 43 (MDSG…DQPP) and 234 to 260 (CGGE…EREN). Residues 244 to 260 (MEDHDVKESDDGGEREN) are compositionally biased toward basic and acidic residues. The C2H2-type 1 zinc finger occupies 282-304 (HFCLICGKGFKRDANLRMHMRGH). The C2H2-type 2; atypical zinc-finger motif lies at 390 to 421 (KHCGRDKWLCSCGTTFSRKDKLFGHVALFQGH).

The protein localises to the nucleus. Functionally, probable transcription factor that may be involved in aluminum tolerance. This is Zinc finger protein STOP1 homolog from Oryza sativa subsp. japonica (Rice).